A 312-amino-acid chain; its full sequence is Methionyl-tRNA formyltransferase (312 aa).

(6S)-5,6,7,8-tetrahydrofolate is bound at residue 110-113 (SLLP).

The protein belongs to the Fmt family.

The enzyme catalyses L-methionyl-tRNA(fMet) + (6R)-10-formyltetrahydrofolate = N-formyl-L-methionyl-tRNA(fMet) + (6S)-5,6,7,8-tetrahydrofolate + H(+). In terms of biological role, attaches a formyl group to the free amino group of methionyl-tRNA(fMet). The formyl group appears to play a dual role in the initiator identity of N-formylmethionyl-tRNA by promoting its recognition by IF2 and preventing the misappropriation of this tRNA by the elongation apparatus. This Streptococcus suis (strain 05ZYH33) protein is Methionyl-tRNA formyltransferase.